Consider the following 259-residue polypeptide: Src-like-adapter 2 (259 aa).

Low complexity predominate over residues 1 to 20 (MGSLSSRGKTSSPSPSSSGP). Residues 1–30 (MGSLSSRGKTSSPSPSSSGPDQEPVSMQPE) form a disordered region. Glycine 2 carries N-myristoyl glycine lipidation. Residues 31–91 (RHKVTAVALG…PSVYVAKVAH (61 aa)) enclose the SH3 domain. Positions 93–190 (WLYEGLSREK…GICCPLREPC (98 aa)) constitute an SH2 domain. An SLA C-terminal region spans residues 190 to 259 (CVLQKLGPLP…SLAEDPLDDA (70 aa)).

As to quaternary structure, interacts (via its C-terminal domain) with CBL (phosphorylated). Interacts (via SH2 domain) with ZAP70 (phosphorylated) and CD3Z (phosphorylated). Interacts (via SH2 domain) with CSF1R (phosphorylated). In terms of processing, phosphorylated by CSF1R. As to expression, mainly expressed in immune system. Highly expressed in spleen and thymus and expressed at intermediate levels in lung. Not expressed in liver, heart and brain. Isoform 1 is predominant in lung and spleen, while isoform 2 is predominant in thymus.

It is found in the cytoplasm. The protein localises to the cell membrane. Its subcellular location is the cytoplasmic vesicle. It localises to the late endosome. Adapter protein, which negatively regulates T-cell receptor (TCR) signaling. Inhibits T-cell antigen-receptor induced activation of nuclear factor of activated T-cells. May act by linking signaling proteins such as ZAP70 with CBL, leading to a CBL dependent degradation of signaling proteins. The polypeptide is Src-like-adapter 2 (Sla2) (Mus musculus (Mouse)).